The primary structure comprises 164 residues: Siroheme decarboxylase alpha subunit (164 aa).

It belongs to the Ahb/Nir family. In terms of assembly, forms a heterodimer composed of AhbA and AhbB.

It carries out the reaction siroheme + 2 H(+) = 12,18-didecarboxysiroheme + 2 CO2. It participates in porphyrin-containing compound metabolism; protoheme biosynthesis. Involved in siroheme-dependent heme b biosynthesis. Catalyzes the decarboxylation of siroheme into didecarboxysiroheme. The polypeptide is Siroheme decarboxylase alpha subunit (Oleidesulfovibrio alaskensis (strain ATCC BAA-1058 / DSM 17464 / G20) (Desulfovibrio alaskensis)).